Reading from the N-terminus, the 286-residue chain is Polyamine aminopropyltransferase (286 aa).

A PABS domain is found at 5–238; that stretch reads TMWHETLHDQ…GIMTFAWATD (234 aa). Residue Q33 coordinates S-methyl-5'-thioadenosine. 2 residues coordinate spermidine: H64 and D88. S-methyl-5'-thioadenosine-binding positions include E108 and 140-141; that span reads DG. Catalysis depends on D158, which acts as the Proton acceptor. Position 158–161 (158–161) interacts with spermidine; it reads DCTD. P165 contributes to the S-methyl-5'-thioadenosine binding site.

Belongs to the spermidine/spermine synthase family. Homodimer or homotetramer.

The protein resides in the cytoplasm. The catalysed reaction is S-adenosyl 3-(methylsulfanyl)propylamine + putrescine = S-methyl-5'-thioadenosine + spermidine + H(+). Its pathway is amine and polyamine biosynthesis; spermidine biosynthesis; spermidine from putrescine: step 1/1. Catalyzes the irreversible transfer of a propylamine group from the amino donor S-adenosylmethioninamine (decarboxy-AdoMet) to putrescine (1,4-diaminobutane) to yield spermidine. This Salmonella arizonae (strain ATCC BAA-731 / CDC346-86 / RSK2980) protein is Polyamine aminopropyltransferase.